The chain runs to 511 residues: Probable DNA ligase (511 aa).

Glu-209 contacts ATP. The N6-AMP-lysine intermediate role is filled by Lys-211. ATP-binding residues include Arg-216, Arg-231, Glu-260, Phe-299, Arg-371, and Lys-377.

It belongs to the ATP-dependent DNA ligase family. Mg(2+) is required as a cofactor.

It catalyses the reaction ATP + (deoxyribonucleotide)n-3'-hydroxyl + 5'-phospho-(deoxyribonucleotide)m = (deoxyribonucleotide)n+m + AMP + diphosphate.. In terms of biological role, DNA ligase that seals nicks in double-stranded DNA during DNA replication, DNA recombination and DNA repair. This is Probable DNA ligase from Mycolicibacterium gilvum (strain PYR-GCK) (Mycobacterium gilvum (strain PYR-GCK)).